The sequence spans 478 residues: Argininosuccinate lyase (478 aa).

The protein belongs to the lyase 1 family. Argininosuccinate lyase subfamily.

It is found in the cytoplasm. It catalyses the reaction 2-(N(omega)-L-arginino)succinate = fumarate + L-arginine. Its pathway is amino-acid biosynthesis; L-arginine biosynthesis; L-arginine from L-ornithine and carbamoyl phosphate: step 3/3. The sequence is that of Argininosuccinate lyase from Leptospira biflexa serovar Patoc (strain Patoc 1 / Ames).